The following is a 329-amino-acid chain: Beta-ketoacyl-[acyl-carrier-protein] synthase III (329 aa).

Catalysis depends on residues cysteine 114 and histidine 254. The ACP-binding stretch occupies residues 255 to 259 (QANLR). Asparagine 284 is an active-site residue.

The protein belongs to the thiolase-like superfamily. FabH family. In terms of assembly, homodimer.

Its subcellular location is the cytoplasm. The catalysed reaction is malonyl-[ACP] + acetyl-CoA + H(+) = 3-oxobutanoyl-[ACP] + CO2 + CoA. It functions in the pathway lipid metabolism; fatty acid biosynthesis. Functionally, catalyzes the condensation reaction of fatty acid synthesis by the addition to an acyl acceptor of two carbons from malonyl-ACP. Catalyzes the first condensation reaction which initiates fatty acid synthesis and may therefore play a role in governing the total rate of fatty acid production. Possesses both acetoacetyl-ACP synthase and acetyl transacylase activities. Its substrate specificity determines the biosynthesis of branched-chain and/or straight-chain of fatty acids. The chain is Beta-ketoacyl-[acyl-carrier-protein] synthase III from Roseiflexus sp. (strain RS-1).